Here is a 289-residue protein sequence, read N- to C-terminus: 4-diphosphocytidyl-2-C-methyl-D-erythritol kinase (289 aa).

Lysine 11 is an active-site residue. Residue proline 95–serine 105 coordinates ATP. Aspartate 137 is a catalytic residue.

The protein belongs to the GHMP kinase family. IspE subfamily.

It carries out the reaction 4-CDP-2-C-methyl-D-erythritol + ATP = 4-CDP-2-C-methyl-D-erythritol 2-phosphate + ADP + H(+). The protein operates within isoprenoid biosynthesis; isopentenyl diphosphate biosynthesis via DXP pathway; isopentenyl diphosphate from 1-deoxy-D-xylulose 5-phosphate: step 3/6. Functionally, catalyzes the phosphorylation of the position 2 hydroxy group of 4-diphosphocytidyl-2C-methyl-D-erythritol. In Aeromonas salmonicida (strain A449), this protein is 4-diphosphocytidyl-2-C-methyl-D-erythritol kinase.